The chain runs to 376 residues: Probable deoxyhypusine synthase (376 aa).

Residues 105-109 (SNLVS), 131-133 (TAG), glutamate 137, and aspartate 238 contribute to the NAD(+) site. Spermidine is bound at residue 136–137 (EE). Aspartate 243 is a binding site for spermidine. Position 283 (glycine 283) interacts with NAD(+). Spermidine is bound at residue histidine 288. 308 to 309 (TG) contacts NAD(+). Spermidine-binding positions include 314–316 (GSD) and 323–329 (EAVSWGK). The active-site Nucleophile is lysine 329. Residue 342–343 (EA) participates in NAD(+) binding.

The protein belongs to the deoxyhypusine synthase family. It depends on NAD(+) as a cofactor.

It catalyses the reaction [eIF5A protein]-L-lysine + spermidine = [eIF5A protein]-deoxyhypusine + propane-1,3-diamine. The protein operates within protein modification; eIF5A hypusination. Its function is as follows. Catalyzes the NAD-dependent oxidative cleavage of spermidine and the subsequent transfer of the butylamine moiety of spermidine to the epsilon-amino group of a critical lysine residue of the eIF-5A precursor protein to form the intermediate deoxyhypusine residue. This is the first step of the post-translational modification of that lysine into an unusual amino acid residue named hypusine. Hypusination is unique to mature eIF-5A factor and is essential for its function. The sequence is that of Probable deoxyhypusine synthase (dhps) from Dictyostelium discoideum (Social amoeba).